Reading from the N-terminus, the 286-residue chain is MSASAPEPPRLDLSFVRRGGRTVIDRRLFAWPFVLTRSFHTDGARPDLLSVILQTGSGAVHGEDRLTQRFTLREGAAVSVTTQGATSVHRAEPGARAVEQVQLRVAAGASLDYRPEPRILFPDAALCQVLELDCAADAVALVTDAFTMHDPDGQGRLFRELDSTVIVRRPSQEPLLIDRMQLCDPGTALFKGRRAFGSAVLMLPDMHDRAAIRLRVIDTLAHIDDLYAAASLLPQSVGIGIRLAARELRQLRAGFDAVAALVREIDLGARAAQAPSAAATARPTAA.

This sequence belongs to the UreD family. In terms of assembly, ureD, UreF and UreG form a complex that acts as a GTP-hydrolysis-dependent molecular chaperone, activating the urease apoprotein by helping to assemble the nickel containing metallocenter of UreC. The UreE protein probably delivers the nickel.

The protein localises to the cytoplasm. Required for maturation of urease via the functional incorporation of the urease nickel metallocenter. The sequence is that of Urease accessory protein UreD 2 from Bradyrhizobium sp. (strain BTAi1 / ATCC BAA-1182).